A 336-amino-acid chain; its full sequence is DNA-directed RNA polymerase subunit alpha (336 aa).

The interval 1–232 is alpha N-terminal domain (alpha-NTD); that stretch reads MIQKNWQELI…DQLGLFVNFE (232 aa). The alpha C-terminal domain (alpha-CTD) stretch occupies residues 248–336; that stretch reads FNPALLKKVD…ELAKRYEDQY (89 aa).

The protein belongs to the RNA polymerase alpha chain family. As to quaternary structure, homodimer. The RNAP catalytic core consists of 2 alpha, 1 beta, 1 beta' and 1 omega subunit. When a sigma factor is associated with the core the holoenzyme is formed, which can initiate transcription.

The enzyme catalyses RNA(n) + a ribonucleoside 5'-triphosphate = RNA(n+1) + diphosphate. Its function is as follows. DNA-dependent RNA polymerase catalyzes the transcription of DNA into RNA using the four ribonucleoside triphosphates as substrates. In Chelativorans sp. (strain BNC1), this protein is DNA-directed RNA polymerase subunit alpha.